Here is a 337-residue protein sequence, read N- to C-terminus: Phenylalanine--tRNA ligase alpha subunit (337 aa).

Glutamate 252 contacts Mg(2+).

The protein belongs to the class-II aminoacyl-tRNA synthetase family. Phe-tRNA synthetase alpha subunit type 1 subfamily. In terms of assembly, tetramer of two alpha and two beta subunits. Requires Mg(2+) as cofactor.

It is found in the cytoplasm. It catalyses the reaction tRNA(Phe) + L-phenylalanine + ATP = L-phenylalanyl-tRNA(Phe) + AMP + diphosphate + H(+). This chain is Phenylalanine--tRNA ligase alpha subunit, found in Saccharophagus degradans (strain 2-40 / ATCC 43961 / DSM 17024).